Here is a 597-residue protein sequence, read N- to C-terminus: Elongation factor 4 (597 aa).

In terms of domain architecture, tr-type G spans 2-184 (QNIRNFSIIA…DIVKKIPAPE (183 aa)). GTP is bound by residues 14 to 19 (DHGKST) and 131 to 134 (NKID).

The protein belongs to the TRAFAC class translation factor GTPase superfamily. Classic translation factor GTPase family. LepA subfamily.

The protein localises to the cell inner membrane. It carries out the reaction GTP + H2O = GDP + phosphate + H(+). Functionally, required for accurate and efficient protein synthesis under certain stress conditions. May act as a fidelity factor of the translation reaction, by catalyzing a one-codon backward translocation of tRNAs on improperly translocated ribosomes. Back-translocation proceeds from a post-translocation (POST) complex to a pre-translocation (PRE) complex, thus giving elongation factor G a second chance to translocate the tRNAs correctly. Binds to ribosomes in a GTP-dependent manner. This chain is Elongation factor 4, found in Haemophilus ducreyi (strain 35000HP / ATCC 700724).